Here is a 231-residue protein sequence, read N- to C-terminus: Female protein (231 aa).

The first 19 residues, Met-1–Ala-19, serve as a signal peptide directing secretion. The Pentraxin (PTX) domain occupies Thr-24–Ala-223. A glycan (N-linked (GlcNAc...) asparagine) is linked at Asn-51. Cys-55 and Cys-114 are disulfide-bonded. Ca(2+) contacts are provided by Asp-77, Asn-78, Glu-155, Gln-156, Asp-157, and Gln-167.

This sequence belongs to the pentraxin family. As to quaternary structure, homopentamer. Pentraxin (or pentaxin) have a discoid arrangement of 5 non-covalently bound subunits. It depends on Ca(2+) as a cofactor.

It localises to the secreted. In Nothocricetulus migratorius (Gray dwarf hamster), this protein is Female protein.